The sequence spans 1455 residues: Nik-related protein kinase (1455 aa).

A Protein kinase domain is found at 25–313; the sequence is FSLDKAIGLG…SGNMLLHPFV (289 aa). ATP-binding positions include 31-39 and Lys54; that span reads IGLGTYGRI. The Proton acceptor role is filled by Asp177. 2 disordered regions span residues 385-404 and 471-568; these read LHGE…PQDQ and TQDN…EDKE. Polar residues predominate over residues 471-480; sequence TQDNKATSPE. The span at 494–505 shows a compositional bias: basic and acidic residues; it reads EALETEQPKDLD. Over residues 520-531 the composition is skewed to low complexity; it reads QPRQGQAAEQQQ. Positions 540–568 are enriched in acidic residues; the sequence is PPEEDREPEQAEVQEEAVEPPQAEIEDKE. The stretch at 716–750 forms a coiled coil; sequence RRRHRRWEDIFNQHEEQLRRVENDREDDSSDNDEV. Disordered stretches follow at residues 760–854 and 1029–1080; these read IEPH…PPYS and AFGN…TETS. Ser847 and Ser850 each carry phosphoserine. Residues 1029-1038 are compositionally biased toward low complexity; sequence AFGNHGANRG. A compositionally biased stretch (basic and acidic residues) spans 1044–1078; the sequence is RNREANGRNEENGAFGRDQHVFPEFEHEESDRGTE. One can recognise a CNH domain in the interval 1138 to 1425; that stretch reads SSEVYCGSLW…RFLCARGDKM (288 aa).

Belongs to the protein kinase superfamily. STE Ser/Thr protein kinase family. STE20 subfamily.

The catalysed reaction is L-seryl-[protein] + ATP = O-phospho-L-seryl-[protein] + ADP + H(+). It carries out the reaction L-threonyl-[protein] + ATP = O-phospho-L-threonyl-[protein] + ADP + H(+). Functionally, may phosphorylate cofilin-1 and induce actin polymerization through this process, during the late stages of embryogenesis. Involved in the TNF-alpha-induced signaling pathway. The polypeptide is Nik-related protein kinase (Nrk) (Mus musculus (Mouse)).